Consider the following 492-residue polypeptide: Octanoyltransferase (492 aa).

Residues 1–255 form a unknown region; sequence MRCILLGSGT…GYDGLEAIID (255 aa). The lipB domain stretch occupies residues 256 to 492; sequence EKGIRIKDFE…AVFRRNFGAL (237 aa). The region spanning 305 to 492 is the BPL/LPL catalytic domain; it reads RKPQNTLLFC…AVFRRNFGAL (188 aa). Substrate-binding positions include 350-357, 423-425, and 436-438; these read RGGDITYH, AIG, and GFA. The active-site Acyl-thioester intermediate is Cys-454.

It in the C-terminal section; belongs to the LipB family.

The protein resides in the cytoplasm. The enzyme catalyses octanoyl-[ACP] + L-lysyl-[protein] = N(6)-octanoyl-L-lysyl-[protein] + holo-[ACP] + H(+). The protein operates within protein modification; protein lipoylation via endogenous pathway; protein N(6)-(lipoyl)lysine from octanoyl-[acyl-carrier-protein]: step 1/2. Functionally, catalyzes the transfer of endogenously produced octanoic acid from octanoyl-acyl-carrier-protein onto the lipoyl domains of lipoate-dependent enzymes. Lipoyl-ACP can also act as a substrate although octanoyl-ACP is likely to be the physiological substrate. The protein is Octanoyltransferase of Porphyromonas gingivalis (strain ATCC BAA-308 / W83).